A 470-amino-acid chain; its full sequence is Type II NADH:quinone oxidoreductase NdhA (470 aa).

FAD is bound by residues 21–25 (GSGFG) and Val89. The active site involves Glu184. Residues Asp323 and 334–335 (AQ) contribute to the FAD site. The helical transmembrane segment at 389–409 (FAGYFAWLAWLVLHLVYLVGY) threads the bilayer.

Belongs to the NADH dehydrogenase family. The cofactor is FAD.

The protein resides in the cell inner membrane. It catalyses the reaction a quinone + NADH + H(+) = a quinol + NAD(+). It carries out the reaction a menaquinone + NADH + H(+) = a menaquinol + NAD(+). Its activity is regulated as follows. Inhibited by phenothiazine analogs. In terms of biological role, alternative, nonproton pumping NADH:quinone oxidoreductase that delivers electrons to the respiratory chain by oxidation of NADH and reduction of quinones. The sequence is that of Type II NADH:quinone oxidoreductase NdhA from Mycobacterium tuberculosis (strain ATCC 25618 / H37Rv).